The chain runs to 273 residues: Putative pyruvate, phosphate dikinase regulatory protein (273 aa).

153–160 (GISRTSKT) contributes to the ADP binding site.

The protein belongs to the pyruvate, phosphate/water dikinase regulatory protein family. PDRP subfamily.

It carries out the reaction N(tele)-phospho-L-histidyl/L-threonyl-[pyruvate, phosphate dikinase] + ADP = N(tele)-phospho-L-histidyl/O-phospho-L-threonyl-[pyruvate, phosphate dikinase] + AMP + H(+). The catalysed reaction is N(tele)-phospho-L-histidyl/O-phospho-L-threonyl-[pyruvate, phosphate dikinase] + phosphate + H(+) = N(tele)-phospho-L-histidyl/L-threonyl-[pyruvate, phosphate dikinase] + diphosphate. Functionally, bifunctional serine/threonine kinase and phosphorylase involved in the regulation of the pyruvate, phosphate dikinase (PPDK) by catalyzing its phosphorylation/dephosphorylation. In Rhizobium etli (strain CIAT 652), this protein is Putative pyruvate, phosphate dikinase regulatory protein.